We begin with the raw amino-acid sequence, 467 residues long: Mitochondrial distribution and morphology protein 10 (467 aa).

The protein belongs to the MDM10 family. As to quaternary structure, component of the ER-mitochondria encounter structure (ERMES) or MDM complex, composed of MMM1, MDM10, MDM12 and MDM34. Associates with the mitochondrial outer membrane sorting assembly machinery SAM(core) complex.

The protein resides in the mitochondrion outer membrane. In terms of biological role, component of the ERMES/MDM complex, which serves as a molecular tether to connect the endoplasmic reticulum and mitochondria. Components of this complex are involved in the control of mitochondrial shape and protein biogenesis and may function in phospholipid exchange. MDM10 is involved in the late assembly steps of the general translocase of the mitochondrial outer membrane (TOM complex). Functions in the TOM40-specific route of the assembly of outer membrane beta-barrel proteins, including the association of TOM40 with the receptor TOM22 and small TOM proteins. Can associate with the SAM(core) complex as well as the MDM12-MMM1 complex, both involved in late steps of the major beta-barrel assembly pathway, that is responsible for biogenesis of all outer membrane beta-barrel proteins. May act as a switch that shuttles between both complexes and channels precursor proteins into the TOM40-specific pathway. Plays a role in mitochondrial morphology and in the inheritance of mitochondria. The sequence is that of Mitochondrial distribution and morphology protein 10 from Ajellomyces capsulatus (strain G186AR / H82 / ATCC MYA-2454 / RMSCC 2432) (Darling's disease fungus).